The following is a 402-amino-acid chain: Putative RNA-guided DNA endonuclease InsQ (402 aa).

Catalysis depends on residues D183 and E267. Zn(2+) is bound by residues C334, C337, C353, and C356. D363 is a catalytic residue.

This sequence in the N-terminal section; belongs to the transposase 2 family. In the C-terminal section; belongs to the transposase 35 family.

Its function is as follows. An RNA-guided dsDNA endonuclease. When guided by an RNA derived from the right-end element of its insertion sequence element (IS), cleaves DNA downstream of the transposon-associated motif (TAM). Cleaves supercoiled and linear DNA in a staggered manner 15-21 bases from the TAM yielding 5'-overhangs. Binds reRNA, an approximately 150 nucleotide base sRNA derived from the 3' end of its own gene, the right end (RE) of the insertion sequence (IS) plus sequence downstream of the IS. Functionally, not required for transposition of the insertion element. The corresponding transposase in strains MG1655 and W3110 is a truncated pseudogene (yncK). In Escherichia coli (strain K12), this protein is Putative RNA-guided DNA endonuclease InsQ (insQ).